A 470-amino-acid chain; its full sequence is Beta-Ala-Xaa dipeptidase (470 aa).

Residue His-87 participates in Zn(2+) binding. The active site involves Asp-89. Asp-119 contacts Zn(2+). Glu-153 acts as the Proton acceptor in catalysis. Zn(2+) contacts are provided by Glu-154 and Asp-177. Arg-350 provides a ligand contact to substrate. Residue His-439 participates in Zn(2+) binding.

Belongs to the peptidase M20A family. Requires Zn(2+) as cofactor.

Its subcellular location is the cytoplasm. Fully inhibited by 1,10-phenanthroline or EDTA. Its function is as follows. Is a relatively unspecific dipeptidase cleaving a variety of dipeptides, notably those with an N-terminal beta-Ala or D-Ala residue, e.g. carnosine (beta-Ala-His). To a lesser extent, also shows aminopeptidase activity, since it is able to catalyze the removal of the N-terminal amino acid from a few distinct tripeptides. The protein is Beta-Ala-Xaa dipeptidase (pepV) of Lactobacillus delbrueckii subsp. lactis.